Here is a 59-residue protein sequence, read N- to C-terminus: UPF0391 membrane protein GbCGDNIH1_2123 (59 aa).

2 helical membrane passes run 6–26 (LALF…TGIS) and 35–55 (ILFV…LAAG).

This sequence belongs to the UPF0391 family.

It is found in the cell membrane. This Granulibacter bethesdensis (strain ATCC BAA-1260 / CGDNIH1) protein is UPF0391 membrane protein GbCGDNIH1_2123.